The chain runs to 207 residues: Ribosomal RNA large subunit methyltransferase E (207 aa).

The S-adenosyl-L-methionine site is built by Gly-56, Trp-58, Asp-76, Asp-94, and Asp-116. The active-site Proton acceptor is Lys-156.

Belongs to the class I-like SAM-binding methyltransferase superfamily. RNA methyltransferase RlmE family.

The protein resides in the cytoplasm. The catalysed reaction is uridine(2552) in 23S rRNA + S-adenosyl-L-methionine = 2'-O-methyluridine(2552) in 23S rRNA + S-adenosyl-L-homocysteine + H(+). Specifically methylates the uridine in position 2552 of 23S rRNA at the 2'-O position of the ribose in the fully assembled 50S ribosomal subunit. The polypeptide is Ribosomal RNA large subunit methyltransferase E (Desulfatibacillum aliphaticivorans).